The following is a 653-amino-acid chain: Glyceraldehyde-3-phosphate:ferredoxin oxidoreductase (653 aa).

Tungstopterin-binding residues include Arg-70, Gly-89, Arg-196, Ala-197, Gly-199, and Arg-206. [4Fe-4S] cluster is bound by residues Cys-333 and Cys-337. Residues Asp-378, Asp-383, and Asp-544 each coordinate tungstopterin. Position 549 (Cys-549) interacts with [4Fe-4S] cluster.

This sequence belongs to the AOR/FOR family. As to quaternary structure, monomer. Requires [4Fe-4S] cluster as cofactor. Tungstopterin serves as cofactor.

The enzyme catalyses D-glyceraldehyde 3-phosphate + 2 oxidized [2Fe-2S]-[ferredoxin] + H2O = (2R)-3-phosphoglycerate + 2 reduced [2Fe-2S]-[ferredoxin] + 3 H(+). With respect to regulation, sensitive to oxygen. Activity increased by 58%-93% in the presence of acetyl phosphate, 3-phosphoglycerate or 2,3-bisphosphoglycerate at 10 mM concentration. Inhibited by up to 25% in the presence of crotonaldehyde or formaldehyde at 10 mM concentration. Inhibited by up to 50% by sodium dithionate. 3.5-fold increase in activity observed by addition of potassium phosphate or sodium arsenate at 200 mM concentration. Activity enhanced by potassium chloride, sodium citrate or sodium sulfate at 200 mM concentration. Its function is as follows. Catalyzes the oxidation of glyceraldehyde-3-phosphate to 3-phosphoglycerate. Uses ferredoxin as electron acceptor. In vitro can also use benzyl viologen, but not NADP or NAD, as electron acceptor. Probably acts as a glycolytic enzyme in place of glyceraldehyde-3-phosphate dehydrogenase (GAPDH) and phosphoglycerate kinase (PGK) in an unusual Emden-Meyerhof glycolysis. The protein is Glyceraldehyde-3-phosphate:ferredoxin oxidoreductase of Pyrococcus furiosus (strain ATCC 43587 / DSM 3638 / JCM 8422 / Vc1).